A 226-amino-acid polypeptide reads, in one-letter code: V-type proton ATPase subunit E 1 (226 aa).

Ala-2 carries the post-translational modification N-acetylalanine. Tyr-56 is modified (phosphotyrosine).

It belongs to the V-ATPase E subunit family. As to quaternary structure, V-ATPase is a heteromultimeric enzyme made up of two complexes: the ATP-hydrolytic V1 complex and the proton translocation V0 complex. The V1 complex consists of three catalytic AB heterodimers that form a heterohexamer, three peripheral stalks each consisting of EG heterodimers, one central rotor including subunits D and F, and the regulatory subunits C and H. The proton translocation complex V0 consists of the proton transport subunit a, a ring of proteolipid subunits c9c'', rotary subunit d, subunits e and f, and the accessory subunits ATP6AP1/Ac45 and ATP6AP2/PRR. Interacts with RABL2/RABL2A; binds preferentially to GTP-bound RABL2. Interacts with ALDOC. Interacts with RAB11B. In terms of tissue distribution, expressed within the midpiece of sperm tail (at protein level). Kidney; localizes to early distal nephron, encompassing thick ascending limbs and distal convoluted tubules (at protein level).

Its subcellular location is the apical cell membrane. It localises to the cytoplasmic vesicle. The protein resides in the secretory vesicle. It is found in the synaptic vesicle membrane. The protein localises to the clathrin-coated vesicle membrane. In terms of biological role, subunit of the V1 complex of vacuolar(H+)-ATPase (V-ATPase), a multisubunit enzyme composed of a peripheral complex (V1) that hydrolyzes ATP and a membrane integral complex (V0) that translocates protons. V-ATPase is responsible for acidifying and maintaining the pH of intracellular compartments and in some cell types, is targeted to the plasma membrane, where it is responsible for acidifying the extracellular environment. The sequence is that of V-type proton ATPase subunit E 1 (Atp6v1e1) from Mus musculus (Mouse).